A 165-amino-acid chain; its full sequence is Transcription antitermination protein NusB (165 aa).

A disordered region spans residues 1–27; that stretch reads MISDDTDQFNPRDAKSPEAAKGKSAKR. Positions 10–21 are enriched in basic and acidic residues; the sequence is NPRDAKSPEAAK.

It belongs to the NusB family.

In terms of biological role, involved in transcription antitermination. Required for transcription of ribosomal RNA (rRNA) genes. Binds specifically to the boxA antiterminator sequence of the ribosomal RNA (rrn) operons. The chain is Transcription antitermination protein NusB from Pseudomonas savastanoi pv. phaseolicola (strain 1448A / Race 6) (Pseudomonas syringae pv. phaseolicola (strain 1448A / Race 6)).